The primary structure comprises 200 residues: Peptidyl-tRNA hydrolase (200 aa).

Tyr-17 lines the tRNA pocket. His-22 (proton acceptor) is an active-site residue. Residues Tyr-78, Asn-80, and Asn-126 each coordinate tRNA.

It belongs to the PTH family. In terms of assembly, monomer.

It is found in the cytoplasm. The enzyme catalyses an N-acyl-L-alpha-aminoacyl-tRNA + H2O = an N-acyl-L-amino acid + a tRNA + H(+). Functionally, hydrolyzes ribosome-free peptidyl-tRNAs (with 1 or more amino acids incorporated), which drop off the ribosome during protein synthesis, or as a result of ribosome stalling. Catalyzes the release of premature peptidyl moieties from peptidyl-tRNA molecules trapped in stalled 50S ribosomal subunits, and thus maintains levels of free tRNAs and 50S ribosomes. In Cutibacterium acnes (strain DSM 16379 / KPA171202) (Propionibacterium acnes), this protein is Peptidyl-tRNA hydrolase.